A 258-amino-acid polypeptide reads, in one-letter code: Small ribosomal subunit protein uS2 (258 aa).

The segment at 226–258 is disordered; that stretch reads AQNKDVEPVADKDEKPEAAPVDEAETATETTGE. Over residues 229–242 the composition is skewed to basic and acidic residues; sequence KDVEPVADKDEKPE. Positions 245–258 are enriched in acidic residues; the sequence is PVDEAETATETTGE.

It belongs to the universal ribosomal protein uS2 family.

This is Small ribosomal subunit protein uS2 from Solidesulfovibrio magneticus (strain ATCC 700980 / DSM 13731 / RS-1) (Desulfovibrio magneticus).